Consider the following 283-residue polypeptide: Gap junction alpha-6 protein (283 aa).

Residues 1–23 (MSDWSALHQLLEKVQPYSTAGGK) are Cytoplasmic-facing. The helical transmembrane segment at 24–41 (VWIKVLFIFRILLLGTAI) threads the bilayer. Topologically, residues 42–76 (ESAWSDEQFEFHCNTQQPGCENVCYDHAFPISHVR) are extracellular. The chain crosses the membrane as a helical span at residues 77–99 (LWVLQVIFVSVPILLYLAHVYYV). Over 100–150 (VRQNKKLNKQEEELEAAHFNEASVERHLETIAGEQFKCGSEEQSKVKMRGR) the chain is Cytoplasmic. A helical membrane pass occupies residues 151-173 (LLLTYMASIFFKSVFEMAFLLIQ). Over 174–208 (WYIYGFTLSALYICEQSPCPRRVDCFLSRPTEKTI) the chain is Extracellular. Residues 209 to 231 (FILFMFVVSVVSFVLDIIELFYV) traverse the membrane as a helical segment. Over 232 to 283 (LFKAIKNRMRKAEDEVYCDELPCPSHVSSSTVLTTIDSSEQAVPVELSSVCI) the chain is Cytoplasmic.

The protein belongs to the connexin family. Alpha-type (group II) subfamily. In terms of assembly, a connexon is composed of a hexamer of connexins.

It is found in the cell membrane. The protein resides in the cell junction. It localises to the gap junction. One gap junction consists of a cluster of closely packed pairs of transmembrane channels, the connexons, through which materials of low MW diffuse from one cell to a neighboring cell. In Mus musculus (Mouse), this protein is Gap junction alpha-6 protein (Gja6).